A 765-amino-acid chain; its full sequence is Spastin (765 aa).

Residues 1–94 form a disordered region; that stretch reads MVRTKNQSSS…TSGYGPRGGT (94 aa). Topologically, residues 1 to 107 are cytoplasmic; it reads MVRTKNQSSS…KQNLYVVSFP (107 aa). The tract at residues 1 to 195 is required for localization to punctate cytoplasmic foci; sequence MVRTKNQSSS…ALLPLEMATN (195 aa). Low complexity predominate over residues 8–19; that stretch reads SSSSSASSSTKS. Residues 48 to 58 show a composition bias toward polar residues; sequence SSKLSSNRQRA. Low complexity predominate over residues 59–72; it reads TITTTTTSTTPGSS. The segment at residues 108–128 is an intramembrane region (helical); sequence IIFLFNVLRSLIYQLFCIFRY. Over 129-765 the chain is Cytoplasmic; that stretch reads LYCASTKVIY…WSQDYGDITI (637 aa). The sufficient for interaction with microtubules and microtubule severing stretch occupies residues 193–765; the sequence is ATNRGGSGGY…WSQDYGDITI (573 aa). The 76-residue stretch at 218-293 folds into the MIT domain; sequence HRRAFEYISK…SMARDRLHFL (76 aa). Residues 329–462 are disordered; it reads QTNSKAAAVE…GSGSGASTPM (134 aa). Positions 355–364 are enriched in low complexity; it reads SGTGSSAGTS. 2 stretches are compositionally biased toward polar residues: residues 389–407 and 428–444; these read NKSQ…STSV and QFSS…RTPI. The required for interaction with microtubules stretch occupies residues 446-462; that stretch reads NNAASGSGSGSGASTPM. Residue 530–537 participates in ATP binding; it reads GPPGNGKT.

The protein belongs to the AAA ATPase family. Spastin subfamily. As to quaternary structure, homohexamer. The homohexamer is stabilized by ATP-binding. The homohexamer may adopt a ring conformation through which microtubules pass prior to being severed. Interacts with microtubules. Interacts with atl; may be involved in microtubule dynamics.

The protein resides in the membrane. Its subcellular location is the cytoplasm. The protein localises to the cytoskeleton. It is found in the microtubule organizing center. It localises to the centrosome. The protein resides in the chromosome. Its subcellular location is the lipid droplet. It carries out the reaction n ATP + n H2O + a microtubule = n ADP + n phosphate + (n+1) alpha/beta tubulin heterodimers.. In terms of biological role, ATP-dependent microtubule severing protein. Stimulates microtubule minus-end depolymerization and poleward microtubule flux in the mitotic spindle. Regulates microtubule stability in the neuromuscular junction synapse. Involved in lipid metabolism by regulating the size and distribution of lipid droplets. Involved in axon regeneration by regulating microtubule severing. The chain is Spastin from Drosophila mojavensis (Fruit fly).